We begin with the raw amino-acid sequence, 330 residues long: 5'-AMP-activated protein kinase subunit gamma-1 (330 aa).

The disordered stretch occupies residues 1-21 (MESVAAESSPALENEHFQETP). CBS domains lie at 42 to 102 (PTSS…KSAL), 124 to 186 (SFKP…PKPE), and 197 to 259 (IGTY…NLDV). Residues arginine 69, 84 to 89 (MLTITD), valine 129, 150 to 151 (HR), and lysine 169 each bind ADP. AMP-binding positions include arginine 69, 84-89 (MLTITD), valine 129, histidine 150, 150-151 (HR), lysine 169, threonine 199, alanine 204, 225-226 (SA), and 241-244 (SKFD). Residues arginine 69, 84 to 89 (MLTITD), valine 129, 150 to 151 (HR), arginine 151, and lysine 169 contribute to the ATP site. An AMPK pseudosubstrate motif is present at residues 137-158 (LFDAVSSLIRNKIHRLPVIDPE). 241–244 (SKFD) is a binding site for ADP. ATP is bound at residue 241 to 244 (SKFD). Residue serine 260 is modified to Phosphoserine; by ULK1. Threonine 262 carries the post-translational modification Phosphothreonine; by ULK1. Arginine 268 contacts ADP. Residue arginine 268 coordinates AMP. Arginine 268 serves as a coordination point for ATP. Serine 269 is modified (phosphoserine; by ULK1). One can recognise a CBS 4 domain in the interval 271–328 (YFEGVLKCYLHETLETIINRLVEAEVHRLVVVDEHDVVKGIVSLSDILQALVLTGGEK). ADP contacts are provided by residues leucine 276 and 297–298 (HR). AMP-binding positions include leucine 276, histidine 297, 297 to 298 (HR), and 313 to 316 (SLSD). Residues leucine 276 and 297 to 298 (HR) each bind ATP.

The protein belongs to the 5'-AMP-activated protein kinase gamma subunit family. In terms of assembly, AMPK is a heterotrimer of an alpha catalytic subunit (PRKAA1 or PRKAA2), a beta (PRKAB1 or PRKAB2) and a gamma non-catalytic subunits (PRKAG1, PRKAG2 or PRKAG3). Interacts with FNIP1 and FNIP2. In terms of processing, phosphorylated by ULK1 and ULK2; leading to negatively regulate AMPK activity and suggesting the existence of a regulatory feedback loop between ULK1, ULK2 and AMPK. Post-translationally, glycosylated; O-GlcNAcylated by OGT, promoting the AMP-activated protein kinase (AMPK) activity.

AMP/ATP-binding subunit of AMP-activated protein kinase (AMPK), an energy sensor protein kinase that plays a key role in regulating cellular energy metabolism. In response to reduction of intracellular ATP levels, AMPK activates energy-producing pathways and inhibits energy-consuming processes: inhibits protein, carbohydrate and lipid biosynthesis, as well as cell growth and proliferation. AMPK acts via direct phosphorylation of metabolic enzymes, and by longer-term effects via phosphorylation of transcription regulators. Also acts as a regulator of cellular polarity by remodeling the actin cytoskeleton; probably by indirectly activating myosin. Gamma non-catalytic subunit mediates binding to AMP, ADP and ATP, leading to activate or inhibit AMPK: AMP-binding results in allosteric activation of alpha catalytic subunit (PRKAA1 or PRKAA2) both by inducing phosphorylation and preventing dephosphorylation of catalytic subunits. ADP also stimulates phosphorylation, without stimulating already phosphorylated catalytic subunit. ATP promotes dephosphorylation of catalytic subunit, rendering the AMPK enzyme inactive. The chain is 5'-AMP-activated protein kinase subunit gamma-1 (Prkag1) from Mus musculus (Mouse).